The following is a 149-amino-acid chain: Small ribosomal subunit protein uS11z (149 aa).

The tract at residues 130–149 (VTPVPTDSTRRKGGRRGRRL) is disordered. The span at 140 to 149 (RKGGRRGRRL) shows a compositional bias: basic residues.

The protein belongs to the universal ribosomal protein uS11 family.

The chain is Small ribosomal subunit protein uS11z from Zea mays (Maize).